The primary structure comprises 116 residues: Large-conductance mechanosensitive channel (116 aa).

Helical transmembrane passes span 7–27 and 64–84; these read EFAL…GAAF and GLFI…FIFV.

The protein belongs to the MscL family. In terms of assembly, homopentamer.

It localises to the cell membrane. Channel that opens in response to stretch forces in the membrane lipid bilayer. May participate in the regulation of osmotic pressure changes within the cell. In Staphylococcus epidermidis (strain ATCC 35984 / DSM 28319 / BCRC 17069 / CCUG 31568 / BM 3577 / RP62A), this protein is Large-conductance mechanosensitive channel.